Consider the following 98-residue polypeptide: NADH-ubiquinone oxidoreductase chain 4L (98 aa).

The next 3 helical transmembrane spans lie at 1 to 21 (MSLTYMNMFMAFTISLLGLLM), 29 to 49 (SLLCLEGMMLSLFVMMTMAIL), and 61 to 81 (IILLVFAACEAALGLSLLVMV).

This sequence belongs to the complex I subunit 4L family. Core subunit of respiratory chain NADH dehydrogenase (Complex I) which is composed of 45 different subunits.

It is found in the mitochondrion inner membrane. It carries out the reaction a ubiquinone + NADH + 5 H(+)(in) = a ubiquinol + NAD(+) + 4 H(+)(out). Functionally, core subunit of the mitochondrial membrane respiratory chain NADH dehydrogenase (Complex I) which catalyzes electron transfer from NADH through the respiratory chain, using ubiquinone as an electron acceptor. Part of the enzyme membrane arm which is embedded in the lipid bilayer and involved in proton translocation. This Vampyressa melissa (Melissa's yellow-eared bat) protein is NADH-ubiquinone oxidoreductase chain 4L (MT-ND4L).